The chain runs to 878 residues: Alanine--tRNA ligase (878 aa).

Zn(2+)-binding residues include His-568, His-572, Cys-670, and His-674.

This sequence belongs to the class-II aminoacyl-tRNA synthetase family. It depends on Zn(2+) as a cofactor.

The protein localises to the cytoplasm. It catalyses the reaction tRNA(Ala) + L-alanine + ATP = L-alanyl-tRNA(Ala) + AMP + diphosphate. Catalyzes the attachment of alanine to tRNA(Ala) in a two-step reaction: alanine is first activated by ATP to form Ala-AMP and then transferred to the acceptor end of tRNA(Ala). Also edits incorrectly charged Ser-tRNA(Ala) and Gly-tRNA(Ala) via its editing domain. The sequence is that of Alanine--tRNA ligase from Latilactobacillus sakei subsp. sakei (strain 23K) (Lactobacillus sakei subsp. sakei).